Here is a 113-residue protein sequence, read N- to C-terminus: ATP-dependent Clp protease adapter protein ClpS (113 aa).

The interval 1–26 (MLMQPLMMSDNPDDESDLGLLTKTRP) is disordered.

Belongs to the ClpS family. Binds to the N-terminal domain of the chaperone ClpA.

Involved in the modulation of the specificity of the ClpAP-mediated ATP-dependent protein degradation. The protein is ATP-dependent Clp protease adapter protein ClpS of Ruegeria sp. (strain TM1040) (Silicibacter sp.).